An 803-amino-acid polypeptide reads, in one-letter code: Zinc finger protein 226 (803 aa).

Residues 8-78 enclose the KRAB domain; that stretch reads VTFKDVAVAF…TTATRRQGNL (71 aa). Residues 252 to 274 form a C2H2-type 1; degenerate zinc finger; that stretch reads YQCNECKKPFSDLSSFDLHQQLQ. The C2H2-type 2; degenerate zinc finger occupies 280–302; sequence LTCVERGKGFCYSPVLPVHQKVH. C2H2-type zinc fingers lie at residues 307–329, 335–357, 363–385, 391–413, 419–441, 447–469, 475–497, 503–525, 531–553, 559–581, 587–609, 615–637, 643–665, 671–693, 699–721, 727–749, and 755–777; these read LKCDECGKEFSQGAHLQTHQKVH, YKCKQCGKGFSRRSALNVHCKVH, YNCEECGRAFSQASHLQDHQRLH, FKCDACGKSFSRNSHLQSHQRVH, YKCEECGKGFICSSNLYIHQRVH, YKCEECGKGFSRPSSLQAHQGVH, YICTVCGKGFTLSSNLQAHQRVH, YKCNECGKSFRRNSHYQVHLVVH, YKCEICGKGFSQSSYLQIHQKAH, FKCEECGQGFNQSSRLQIHQLIH, YKCEECGKGFSRRADLKIHCRIH, YNCEECGKVFRQASNLLAHQRVH, FKCEECGKSFGRSAHLQAHQKVH, YKCDECGKGFKWSLNLDMHQRVH, YKCGECGKYFSQASSLQLHQSVH, YKCDVCGKVFSRSSQLQSHQRVH, and YKCEICGKSFSWRSNLTVHHRIH. The segment at 781-803 is disordered; it reads KSYKSNRGGKNIRESTQEKKSIK. Residues 791–803 are compositionally biased toward basic and acidic residues; it reads NIRESTQEKKSIK.

It belongs to the krueppel C2H2-type zinc-finger protein family.

The protein resides in the nucleus. May be involved in transcriptional regulation. This chain is Zinc finger protein 226 (ZNF226), found in Homo sapiens (Human).